A 419-amino-acid polypeptide reads, in one-letter code: ATP phosphoribosyltransferase regulatory subunit (419 aa).

Belongs to the class-II aminoacyl-tRNA synthetase family. HisZ subfamily. Heteromultimer composed of HisG and HisZ subunits.

Its subcellular location is the cytoplasm. It participates in amino-acid biosynthesis; L-histidine biosynthesis; L-histidine from 5-phospho-alpha-D-ribose 1-diphosphate: step 1/9. Functionally, required for the first step of histidine biosynthesis. May allow the feedback regulation of ATP phosphoribosyltransferase activity by histidine. In Ruminiclostridium cellulolyticum (strain ATCC 35319 / DSM 5812 / JCM 6584 / H10) (Clostridium cellulolyticum), this protein is ATP phosphoribosyltransferase regulatory subunit.